Consider the following 353-residue polypeptide: Photosystem II D2 protein (353 aa).

At Thr-2 the chain carries N-acetylthreonine. Thr-2 is modified (phosphothreonine). Residues 41 to 61 (CAYFALGGWFTGTTFVTSWYT) form a helical membrane-spanning segment. Chlorophyll a is bound at residue His-118. The chain crosses the membrane as a helical span at residues 125–141 (GFMLRQFELARSVQLRP). Pheophytin a-binding residues include Gln-130 and Asn-143. Residues 153 to 166 (VFVSVFLIYPLGQS) form a helical membrane-spanning segment. His-198 is a chlorophyll a binding site. The chain crosses the membrane as a helical span at residues 208-228 (AALLCAIHGATVENTLFEDGD). A plastoquinone contacts are provided by His-215 and Phe-262. His-215 lines the Fe cation pocket. A Fe cation-binding site is contributed by His-269. A helical transmembrane segment spans residues 279 to 295 (GLWMSAIGVVGLALNLR).

Belongs to the reaction center PufL/M/PsbA/D family. PSII is composed of 1 copy each of membrane proteins PsbA, PsbB, PsbC, PsbD, PsbE, PsbF, PsbH, PsbI, PsbJ, PsbK, PsbL, PsbM, PsbT, PsbX, PsbY, PsbZ, Psb30/Ycf12, at least 3 peripheral proteins of the oxygen-evolving complex and a large number of cofactors. It forms dimeric complexes. The D1/D2 heterodimer binds P680, chlorophylls that are the primary electron donor of PSII, and subsequent electron acceptors. It shares a non-heme iron and each subunit binds pheophytin, quinone, additional chlorophylls, carotenoids and lipids. There is also a Cl(-1) ion associated with D1 and D2, which is required for oxygen evolution. The PSII complex binds additional chlorophylls, carotenoids and specific lipids. is required as a cofactor.

The protein resides in the plastid. It localises to the chloroplast thylakoid membrane. It carries out the reaction 2 a plastoquinone + 4 hnu + 2 H2O = 2 a plastoquinol + O2. In terms of biological role, photosystem II (PSII) is a light-driven water:plastoquinone oxidoreductase that uses light energy to abstract electrons from H(2)O, generating O(2) and a proton gradient subsequently used for ATP formation. It consists of a core antenna complex that captures photons, and an electron transfer chain that converts photonic excitation into a charge separation. The D1/D2 (PsbA/PsbD) reaction center heterodimer binds P680, the primary electron donor of PSII as well as several subsequent electron acceptors. D2 is needed for assembly of a stable PSII complex. This is Photosystem II D2 protein from Cryptomeria japonica (Japanese cedar).